The chain runs to 101 residues: Urease subunit beta (101 aa).

This sequence belongs to the urease beta subunit family. In terms of assembly, heterotrimer of UreA (gamma), UreB (beta) and UreC (alpha) subunits. Three heterotrimers associate to form the active enzyme.

The protein resides in the cytoplasm. It catalyses the reaction urea + 2 H2O + H(+) = hydrogencarbonate + 2 NH4(+). It participates in nitrogen metabolism; urea degradation; CO(2) and NH(3) from urea (urease route): step 1/1. This is Urease subunit beta from Burkholderia thailandensis (strain ATCC 700388 / DSM 13276 / CCUG 48851 / CIP 106301 / E264).